Here is a 402-residue protein sequence, read N- to C-terminus: Argininosuccinate synthase (402 aa).

An ATP-binding site is contributed by 9-17 (AYSGGLDTS). Position 86 (Y86) interacts with L-citrulline. Position 116 (G116) interacts with ATP. 3 residues coordinate L-aspartate: T118, N122, and D123. Residue N122 participates in L-citrulline binding. Residues R126, S174, S183, E259, and Y271 each coordinate L-citrulline.

It belongs to the argininosuccinate synthase family. Type 1 subfamily. In terms of assembly, homotetramer.

The protein localises to the cytoplasm. It catalyses the reaction L-citrulline + L-aspartate + ATP = 2-(N(omega)-L-arginino)succinate + AMP + diphosphate + H(+). It functions in the pathway amino-acid biosynthesis; L-arginine biosynthesis; L-arginine from L-ornithine and carbamoyl phosphate: step 2/3. This Geobacillus sp. (strain WCH70) protein is Argininosuccinate synthase.